We begin with the raw amino-acid sequence, 411 residues long: ACT domain-containing protein ACR9 (411 aa).

3 ACT domains span residues 22–105 (VVTV…NVSK), 111–194 (LLKF…LAGP), and 243–322 (LLQI…VIIV).

May bind amino acids. This Arabidopsis thaliana (Mouse-ear cress) protein is ACT domain-containing protein ACR9.